Here is a 173-residue protein sequence, read N- to C-terminus: Lipoprotein signal peptidase (173 aa).

2 helical membrane passes run 67–87 (WISL…PHLG) and 92–112 (MGFG…FAFG). Active-site residues include Asp-116 and Asp-132. A helical membrane pass occupies residues 125 to 145 (FPVFNGADIAINLGLACLLIG). A disordered region spans residues 151 to 173 (SRTPAPARPASKQIREPTDTTGG). The span at 163–173 (QIREPTDTTGG) shows a compositional bias: basic and acidic residues.

Belongs to the peptidase A8 family.

The protein resides in the cell inner membrane. It carries out the reaction Release of signal peptides from bacterial membrane prolipoproteins. Hydrolyzes -Xaa-Yaa-Zaa-|-(S,diacylglyceryl)Cys-, in which Xaa is hydrophobic (preferably Leu), and Yaa (Ala or Ser) and Zaa (Gly or Ala) have small, neutral side chains.. Its pathway is protein modification; lipoprotein biosynthesis (signal peptide cleavage). Its function is as follows. This protein specifically catalyzes the removal of signal peptides from prolipoproteins. The sequence is that of Lipoprotein signal peptidase from Gloeobacter violaceus (strain ATCC 29082 / PCC 7421).